A 232-amino-acid chain; its full sequence is tRNA (guanine-N(1)-)-methyltransferase (232 aa).

S-adenosyl-L-methionine contacts are provided by residues Gly112 and 132 to 137 (IGDYIL).

The protein belongs to the RNA methyltransferase TrmD family. In terms of assembly, homodimer.

Its subcellular location is the cytoplasm. It carries out the reaction guanosine(37) in tRNA + S-adenosyl-L-methionine = N(1)-methylguanosine(37) in tRNA + S-adenosyl-L-homocysteine + H(+). Specifically methylates guanosine-37 in various tRNAs. The polypeptide is tRNA (guanine-N(1)-)-methyltransferase (Methylacidiphilum infernorum (isolate V4) (Methylokorus infernorum (strain V4))).